The chain runs to 626 residues: Serine/threonine-protein kinase ATG1a (626 aa).

Positions 10–268 constitute a Protein kinase domain; the sequence is YALGPRIGSG…FREFFNHMFL (259 aa). Residues 16–24 and Lys-39 each bind ATP; that span reads IGSGSFAVV. Asp-132 acts as the Proton acceptor in catalysis. The span at 288-308 shows a compositional bias: polar residues; the sequence is KSLLPSAQPSTSTNRFKSSAE. Positions 288 to 347 are disordered; the sequence is KSLLPSAQPSTSTNRFKSSAENVHKHGSSSSASNSQISMPHTSFEKTRKDTEGQCSSNQS. A compositionally biased stretch (low complexity) spans 315-325; it reads SSSSASNSQIS. The span at 330 to 339 shows a compositional bias: basic and acidic residues; it reads SFEKTRKDTE. The short motif at 360–363 is the AIM (Atg8-family-interacting motif) element; the sequence is YVLV.

It belongs to the protein kinase superfamily. Ser/Thr protein kinase family. Interacts with ATG13A. Interacts with ATG8E. Binds to ATG8E on autophagic vesicles. Post-translationally, phosphorylated during nutrient starvation. Dephosphorylated in nutrient-rich conditions.

The protein localises to the cytoplasmic vesicle. Its subcellular location is the autophagosome. Serine/threonine protein kinase involved in autophagy in a nutritional condition-dependent manner. The ATG1-ATG13 protein kinase complex regulates downstream events required for autophagosome enclosure and/or vacuolar delivery. Becomes a target of autophagy under nutrient starvation. Connects autophagy to plant nutritional status. The protein is Serine/threonine-protein kinase ATG1a of Arabidopsis thaliana (Mouse-ear cress).